The following is a 431-amino-acid chain: E3 ubiquitin-protein ligase marc-3 (431 aa).

The RING-CH-type zinc-finger motif lies at 5 to 74 (NASLGPAVCR…EICKFAFKIK (70 aa)). 8 residues coordinate Zn(2+): Cys-13, Cys-16, Cys-38, Cys-40, His-48, Cys-51, Cys-64, and Cys-67. 2 consecutive transmembrane segments (helical) span residues 98 to 118 (PFID…GVFM) and 157 to 177 (LFLF…VSAL). 2 disordered regions span residues 267 to 289 (TSPD…FGRR) and 327 to 349 (SRAT…RDMR). The segment covering 273–282 (NTHHHDESRN) has biased composition (basic and acidic residues).

It is found in the cell membrane. It localises to the endosome membrane. The catalysed reaction is S-ubiquitinyl-[E2 ubiquitin-conjugating enzyme]-L-cysteine + [acceptor protein]-L-lysine = [E2 ubiquitin-conjugating enzyme]-L-cysteine + N(6)-ubiquitinyl-[acceptor protein]-L-lysine.. The protein operates within protein modification; protein ubiquitination. E3 ubiquitin-protein ligase which positively regulates the fast polyspermy block during fertilization, preventing entry of more than one sperm into the oocyte. After fertilization, required in the zygote for the selective degradation of a subset of maternal membrane proteins including cav-1, chs-1 and rme-2, probably by mediating their K63-linked polyubiquitination. The protein is E3 ubiquitin-protein ligase marc-3 of Caenorhabditis elegans.